The chain runs to 148 residues: Suppressor APC domain-containing protein 1 (148 aa).

The segment at 120-148 (SRQQKGVTQPKEEMAQRGCTKGPRGPTRV) is disordered.

This chain is Suppressor APC domain-containing protein 1 (SAPCD1), found in Homo sapiens (Human).